Reading from the N-terminus, the 133-residue chain is ATP synthase epsilon chain (133 aa).

Belongs to the ATPase epsilon chain family. As to quaternary structure, F-type ATPases have 2 components, CF(1) - the catalytic core - and CF(0) - the membrane proton channel. CF(1) has five subunits: alpha(3), beta(3), gamma(1), delta(1), epsilon(1). CF(0) has three main subunits: a, b and c.

It localises to the cell membrane. Functionally, produces ATP from ADP in the presence of a proton gradient across the membrane. The sequence is that of ATP synthase epsilon chain from Bacillus cytotoxicus (strain DSM 22905 / CIP 110041 / 391-98 / NVH 391-98).